The following is a 919-amino-acid chain: Periodic tryptophan protein 2 homolog (919 aa).

WD repeat units follow at residues G12 to L50, A53 to F93, H94 to N132, G142 to Y181, and G186 to R225. K55 is subject to N6-acetyllysine. The segment at Q238–Q266 is disordered. Residues E242 to D252 are compositionally biased toward acidic residues. WD repeat units follow at residues G286–S325, I328–K368, G371–T410, E413–T452, P456–S498, G499–E538, T541–S580, A603–R642, and K700–E740. The tract at residues T885–I919 is disordered. A compositionally biased stretch (acidic residues) spans V889 to E900. A Phosphothreonine modification is found at T891. S895, S898, and S902 each carry phosphoserine.

It belongs to the WD repeat PWP2 family. In terms of assembly, part of the small subunit (SSU) processome, composed of more than 70 proteins and the RNA chaperone small nucleolar RNA (snoRNA) U3.

Its subcellular location is the nucleus. It is found in the nucleolus. Functionally, part of the small subunit (SSU) processome, first precursor of the small eukaryotic ribosomal subunit. During the assembly of the SSU processome in the nucleolus, many ribosome biogenesis factors, an RNA chaperone and ribosomal proteins associate with the nascent pre-rRNA and work in concert to generate RNA folding, modifications, rearrangements and cleavage as well as targeted degradation of pre-ribosomal RNA by the RNA exosome. The sequence is that of Periodic tryptophan protein 2 homolog (Pwp2) from Mus musculus (Mouse).